The chain runs to 98 residues: A-type ATP synthase subunit F (98 aa).

It belongs to the V-ATPase F subunit family. The A-type ATPase is composed of subunits A(3), B(3), C, D, E(1 or 2), F, H(2), I and K(x).

It is found in the cell membrane. In terms of biological role, component of the A-type ATP synthase that produces ATP from ADP in the presence of a proton gradient across the membrane. The chain is A-type ATP synthase subunit F from Methanocaldococcus jannaschii (strain ATCC 43067 / DSM 2661 / JAL-1 / JCM 10045 / NBRC 100440) (Methanococcus jannaschii).